A 421-amino-acid polypeptide reads, in one-letter code: Serine--tRNA ligase (421 aa).

229–231 contributes to the L-serine binding site; sequence TAE. 260–262 provides a ligand contact to ATP; that stretch reads RAE. Glutamate 283 is a binding site for L-serine. 347 to 350 provides a ligand contact to ATP; it reads EISS. Serine 383 is a binding site for L-serine.

Belongs to the class-II aminoacyl-tRNA synthetase family. Type-1 seryl-tRNA synthetase subfamily. In terms of assembly, homodimer. The tRNA molecule binds across the dimer.

Its subcellular location is the cytoplasm. It carries out the reaction tRNA(Ser) + L-serine + ATP = L-seryl-tRNA(Ser) + AMP + diphosphate + H(+). The catalysed reaction is tRNA(Sec) + L-serine + ATP = L-seryl-tRNA(Sec) + AMP + diphosphate + H(+). It functions in the pathway aminoacyl-tRNA biosynthesis; selenocysteinyl-tRNA(Sec) biosynthesis; L-seryl-tRNA(Sec) from L-serine and tRNA(Sec): step 1/1. Its function is as follows. Catalyzes the attachment of serine to tRNA(Ser). Is also able to aminoacylate tRNA(Sec) with serine, to form the misacylated tRNA L-seryl-tRNA(Sec), which will be further converted into selenocysteinyl-tRNA(Sec). This is Serine--tRNA ligase from Desulfitobacterium hafniense (strain Y51).